We begin with the raw amino-acid sequence, 707 residues long: U-box domain-containing protein 2 (707 aa).

Residues 239–313 (RVPSDFRCSL…ASWCETNNVY (75 aa)) enclose the U-box domain. ARM repeat units follow at residues 453–492 (TDNRIVIARCEAIPSLVSLLYSTDERIQADAVTCLLNLSI), 494–534 (DNNK…SLSV), 536–575 (EEYKTEIGEAGAIEPLVDLLGSGSLSGKKDAATALFNLSI), 577–615 (HENKTKVIEAGAVRYLVELMDPAFGMVEKAVVVLANLAT), and 617–656 (REGKIAIGEEGGIPVLVEVVELGSARGKENATAALLQLCT).

It catalyses the reaction S-ubiquitinyl-[E2 ubiquitin-conjugating enzyme]-L-cysteine + [acceptor protein]-L-lysine = [E2 ubiquitin-conjugating enzyme]-L-cysteine + N(6)-ubiquitinyl-[acceptor protein]-L-lysine.. The protein operates within protein modification; protein ubiquitination. Its function is as follows. Functions as an E3 ubiquitin ligase. The sequence is that of U-box domain-containing protein 2 (PUB2) from Arabidopsis thaliana (Mouse-ear cress).